The following is a 341-amino-acid chain: Phosphate acyltransferase (341 aa).

It belongs to the PlsX family. In terms of assembly, homodimer. Probably interacts with PlsY.

It localises to the cytoplasm. The enzyme catalyses a fatty acyl-[ACP] + phosphate = an acyl phosphate + holo-[ACP]. It participates in lipid metabolism; phospholipid metabolism. In terms of biological role, catalyzes the reversible formation of acyl-phosphate (acyl-PO(4)) from acyl-[acyl-carrier-protein] (acyl-ACP). This enzyme utilizes acyl-ACP as fatty acyl donor, but not acyl-CoA. The sequence is that of Phosphate acyltransferase from Aliivibrio salmonicida (strain LFI1238) (Vibrio salmonicida (strain LFI1238)).